A 403-amino-acid polypeptide reads, in one-letter code: 5,7-dihydroxy-2-methylchromone synthase (403 aa).

H68 is a binding site for CoA. C174 is a catalytic residue. C174 carries the post-translational modification Cysteine sulfinic acid (-SO2H). CoA contacts are provided by residues L277, S281, and 318–321 (GGRA).

Belongs to the thiolase-like superfamily. Chalcone/stilbene synthases family. Homodimer.

The catalysed reaction is 5 malonyl-CoA + 4 H(+) = 5,7-dihydroxy-2-methyl-4H-chromen-4-one + 5 CO2 + 5 CoA + H2O. The protein operates within secondary metabolite biosynthesis; flavonoid biosynthesis. In terms of biological role, catalyzes the iterative condensations of 5 molecules of malonyl-CoA to produce a pentaketide 5,7-dihydroxy-2-methylchromone. This is 5,7-dihydroxy-2-methylchromone synthase from Aloe arborescens (Kidachi aloe).